Consider the following 355-residue polypeptide: Peptide chain release factor 1 (355 aa).

N5-methylglutamine is present on Gln231.

This sequence belongs to the prokaryotic/mitochondrial release factor family. In terms of processing, methylated by PrmC. Methylation increases the termination efficiency of RF1.

The protein localises to the cytoplasm. Peptide chain release factor 1 directs the termination of translation in response to the peptide chain termination codons UAG and UAA. In Erythrobacter litoralis (strain HTCC2594), this protein is Peptide chain release factor 1.